The following is a 126-amino-acid chain: Fluoride-specific ion channel FluC (126 aa).

4 consecutive transmembrane segments (helical) span residues 5 to 25 (ILVA…GAGV), 37 to 57 (VAIM…VVWA), 65 to 85 (LSPF…AFSL), and 101 to 121 (LYVA…LWVA). Na(+) is bound by residues Gly75 and Thr78.

The protein belongs to the fluoride channel Fluc/FEX (TC 1.A.43) family.

It is found in the cell inner membrane. It carries out the reaction fluoride(in) = fluoride(out). Its activity is regulated as follows. Na(+) is not transported, but it plays an essential structural role and its presence is essential for fluoride channel function. Functionally, fluoride-specific ion channel. Important for reducing fluoride concentration in the cell, thus reducing its toxicity. This is Fluoride-specific ion channel FluC from Roseobacter denitrificans (strain ATCC 33942 / OCh 114) (Erythrobacter sp. (strain OCh 114)).